We begin with the raw amino-acid sequence, 64 residues long: Large ribosomal subunit protein uL29 (64 aa).

The protein belongs to the universal ribosomal protein uL29 family.

This chain is Large ribosomal subunit protein uL29, found in Coprothermobacter proteolyticus (strain ATCC 35245 / DSM 5265 / OCM 4 / BT).